The primary structure comprises 148 residues: uncharacterized protein (148 aa).

The interval 83–148 (QPAVIPPVKA…TKKSNKKTRS (66 aa)) is disordered. Basic residues-rich tracts occupy residues 92–103 (AKPKATKKKTPV) and 113–124 (KQTKPKQSKPKS).

This is an uncharacterized protein from Mycoplasma genitalium (strain ATCC 33530 / DSM 19775 / NCTC 10195 / G37) (Mycoplasmoides genitalium).